Here is an 824-residue protein sequence, read N- to C-terminus: Kinesin-like protein KIFC3 (824 aa).

Residues 27-79 (EPKPGMARPAPASPAARPFPHTGQGRLRTGRGKDILPSGEEDSTSRTAARPSL) form a disordered region. Residues 33–46 (ARPAPASPAARPFP) show a composition bias toward low complexity. 2 coiled-coil regions span residues 100 to 360 (LTVQ…ENLA) and 393 to 430 (LLQEALRSVKAEIGQAIEEVNSNNQELLRKYRRELQLR). A Kinesin motor domain is found at 443 to 766 (NIRVIARVRP…LRFAERVRSV (324 aa)). Position 526 to 533 (526 to 533 (GQTGAGKT)) interacts with ATP. A disordered region spans residues 771–824 (GSRRTELGSWSSQEHLEWEPACQTPQPTARAHSAPGSGTSSRPGSIRRKLQPSA). Phosphoserine is present on residues Ser-811 and Ser-815. Basic residues predominate over residues 815–824 (SIRRKLQPSA).

It belongs to the TRAFAC class myosin-kinesin ATPase superfamily. Kinesin family. Interacts with annexin XIIIB. As to expression, predominant expression in the kidney, testis and ovary. Also expressed in brain, heart, liver, lung and uterus.

Its subcellular location is the cytoplasm. The protein resides in the cytoskeleton. It is found in the cytoplasmic vesicle membrane. The protein localises to the cell junction. It localises to the adherens junction. Its subcellular location is the microtubule organizing center. The protein resides in the centrosome. Its function is as follows. Minus-end microtubule-dependent motor protein. Involved in apically targeted transport. Required for zonula adherens maintenance. The chain is Kinesin-like protein KIFC3 (Kifc3) from Mus musculus (Mouse).